We begin with the raw amino-acid sequence, 192 residues long: Large ribosomal subunit protein bL9 (192 aa).

A disordered region spans residues 173–192 (ALRPEDFFDPEADGLDENEA). The segment covering 179–192 (FFDPEADGLDENEA) has biased composition (acidic residues).

Belongs to the bacterial ribosomal protein bL9 family.

Functionally, binds to the 23S rRNA. The sequence is that of Large ribosomal subunit protein bL9 from Rhizobium etli (strain ATCC 51251 / DSM 11541 / JCM 21823 / NBRC 15573 / CFN 42).